We begin with the raw amino-acid sequence, 98 residues long: MLCAVYKSIRKSQTYLFIAKRDDFSSVPEPLLAQFGPPQLVSLLNITLQTKFAMAEAEKVLSAVKNNGYYLQLPPPPVNHLQEHKDWKKKRQENKNEI.

The region spanning M1 to K85 is the YcgL domain. Residues P75–I98 are disordered.

The polypeptide is YcgL domain-containing protein Ping_1076 (Psychromonas ingrahamii (strain DSM 17664 / CCUG 51855 / 37)).